The chain runs to 119 residues: Small ribosomal subunit protein uS13 (119 aa).

The disordered stretch occupies residues 90-119 (IRHRRGLPLRGQRTRSNARTRKGKRKPIRS). The segment covering 91–119 (RHRRGLPLRGQRTRSNARTRKGKRKPIRS) has biased composition (basic residues).

This sequence belongs to the universal ribosomal protein uS13 family. As to quaternary structure, part of the 30S ribosomal subunit. Forms a loose heterodimer with protein S19. Forms two bridges to the 50S subunit in the 70S ribosome.

Located at the top of the head of the 30S subunit, it contacts several helices of the 16S rRNA. In the 70S ribosome it contacts the 23S rRNA (bridge B1a) and protein L5 of the 50S subunit (bridge B1b), connecting the 2 subunits; these bridges are implicated in subunit movement. Contacts the tRNAs in the A and P-sites. This Coxiella burnetii (strain CbuK_Q154) (Coxiella burnetii (strain Q154)) protein is Small ribosomal subunit protein uS13.